We begin with the raw amino-acid sequence, 268 residues long: CCAAT/enhancer-binding protein delta (268 aa).

Disordered regions lie at residues 1-48, 97-132, and 152-219; these read MSAA…LGST, GLEL…DAPG, and AAQP…NQEM. Ser2 carries the N-acetylserine modification. Residue Lys120 forms a Glycyl lysine isopeptide (Lys-Gly) (interchain with G-Cter in SUMO) linkage. The segment covering 155–167 has biased composition (pro residues); that stretch reads PTPPTSPEPPRGS. Basic and acidic residues predominate over residues 177–201; the sequence is VREKGAGKRGPDRGSPEYRQRRERN. One can recognise a bZIP domain in the interval 191 to 254; it reads SPEYRQRRER…AGLRQFFKKL (64 aa). Residues 195 to 222 are basic motif; it reads RQRRERNNIAVRKSRDKAKRRNQEMQQK. The segment at 226-254 is leucine-zipper; sequence LSAENEKLHQRVEQLTRDLAGLRQFFKKL.

Belongs to the bZIP family. C/EBP subfamily. In terms of assembly, binds DNA as a homodimer and as a heterodimer. Can form stable heterodimers with CEBPA, CEBPB and CEBPE. Directly interacts with SPI1/PU.1; this interaction does not affect DNA-binding properties of each partner. Interacts with PRDM16.

It localises to the nucleus. Its function is as follows. Transcription activator that recognizes two different DNA motifs: the CCAAT homology common to many promoters and the enhanced core homology common to many enhancers. Important transcription factor regulating the expression of genes involved in immune and inflammatory responses. Transcriptional activator that enhances IL6 transcription alone and as heterodimer with CEBPB. The sequence is that of CCAAT/enhancer-binding protein delta (Cebpd) from Mus musculus (Mouse).